Consider the following 88-residue polypeptide: Small ribosomal subunit protein bS20 (88 aa).

Disordered stretches follow at residues 1-23 (MANT…VNKA) and 65-88 (GVMH…SLSA).

This sequence belongs to the bacterial ribosomal protein bS20 family.

Functionally, binds directly to 16S ribosomal RNA. The protein is Small ribosomal subunit protein bS20 of Rhizobium meliloti (strain 1021) (Ensifer meliloti).